Consider the following 312-residue polypeptide: Apolipoprotein E (312 aa).

Positions M1–A18 are cleaved as a signal peptide. Repeat copies occupy residues V72–G93, P94–G115, A116–G137, Q138–M159, R160–E181, R182–A203, N204–R225, and G226–E247. The 8 X 22 AA approximate tandem repeats stretch occupies residues V72–E247. M135 is modified (methionine sulfoxide). A Phosphoserine modification is found at S139. The tract at residues H150 to R160 is LDL and other lipoprotein receptors binding. Positions H150–R160 are LDL receptor binding. A heparin-binding site is contributed by M154–R157. Residues T202–M282 form a lipid-binding and lipoprotein association region. S221 to L228 contacts heparin. Residues Q258 to Q312 form a homooligomerization region. The interval R270–M282 is specificity for association with VLDL.

It belongs to the apolipoprotein A1/A4/E family. In terms of assembly, homotetramer. May interact with ABCA1; functionally associated with ABCA1 in the biogenesis of HDLs. May interact with APP/A4 amyloid-beta peptide; the interaction is extremely stable in vitro but its physiological significance is unclear. May interact with MAPT. May interact with MAP2. In the cerebrospinal fluid, interacts with secreted SORL1. Interacts with PMEL; this allows the loading of PMEL luminal fragment on ILVs to induce fibril nucleation. In terms of processing, APOE exists as multiple glycosylated and sialylated glycoforms within cells and in plasma. The extent of glycosylation and sialylation are tissue and context specific. Post-translationally, glycated in plasma VLDL. Phosphorylated by FAM20C in the extracellular medium.

It localises to the secreted. It is found in the extracellular space. The protein resides in the extracellular matrix. Its subcellular location is the extracellular vesicle. The protein localises to the endosome. It localises to the multivesicular body. In terms of biological role, APOE is an apolipoprotein, a protein associating with lipid particles, that mainly functions in lipoprotein-mediated lipid transport between organs via the plasma and interstitial fluids. APOE is a core component of plasma lipoproteins and is involved in their production, conversion and clearance. Apolipoproteins are amphipathic molecules that interact both with lipids of the lipoprotein particle core and the aqueous environment of the plasma. As such, APOE associates with chylomicrons, chylomicron remnants, very low density lipoproteins (VLDL) and intermediate density lipoproteins (IDL) but shows a preferential binding to high-density lipoproteins (HDL). It also binds a wide range of cellular receptors including the LDL receptor/LDLR, the LDL receptor-related proteins LRP1, LRP2 and LRP8 and the very low-density lipoprotein receptor/VLDLR that mediate the cellular uptake of the APOE-containing lipoprotein particles. Finally, APOE also has a heparin-binding activity and binds heparan-sulfate proteoglycans on the surface of cells, a property that supports the capture and the receptor-mediated uptake of APOE-containing lipoproteins by cells. A main function of APOE is to mediate lipoprotein clearance through the uptake of chylomicrons, VLDLs, and HDLs by hepatocytes. APOE is also involved in the biosynthesis by the liver of VLDLs as well as their uptake by peripheral tissues ensuring the delivery of triglycerides and energy storage in muscle, heart and adipose tissues. By participating in the lipoprotein-mediated distribution of lipids among tissues, APOE plays a critical role in plasma and tissues lipid homeostasis. APOE is also involved in two steps of reverse cholesterol transport, the HDLs-mediated transport of cholesterol from peripheral tissues to the liver, and thereby plays an important role in cholesterol homeostasis. First, it is functionally associated with ABCA1 in the biogenesis of HDLs in tissues. Second, it is enriched in circulating HDLs and mediates their uptake by hepatocytes. APOE also plays an important role in lipid transport in the central nervous system, regulating neuron survival and sprouting. The sequence is that of Apolipoprotein E (Apoe) from Rattus rattus (Black rat).